Consider the following 462-residue polypeptide: PTS system mannitol-specific cryptic EIICB component (462 aa).

The Cytoplasmic segment spans residues Met1–Asn24. The PTS EIIC type-2 domain maps to Phe13–Glu344. A helical membrane pass occupies residues Ile25–Asn46. Residues Glu47 to Ala50 are Periplasmic-facing. The chain crosses the membrane as a helical span at residues Lys51–His71. Over Leu72–Phe134 the chain is Cytoplasmic. A helical membrane pass occupies residues Ser135–Leu156. At Ile157–Cys165 the chain is on the periplasmic side. Residues Ile166 to Lys186 traverse the membrane as a helical segment. Over Val187–Ala273 the chain is Cytoplasmic. Residues Met274–Val293 form a helical membrane-spanning segment. Residues Ala294 to Phe313 lie on the Periplasmic side of the membrane. A helical transmembrane segment spans residues Leu314–Leu335. Residues Lys336–His462 lie on the Cytoplasmic side of the membrane. The 91-residue stretch at Lys371 to Lys461 folds into the PTS EIIB type-2 domain. Catalysis depends on Cys377, which acts as the Phosphocysteine intermediate; for EIIB activity. Cys377 is subject to Phosphocysteine; by EIIA.

The protein resides in the cell inner membrane. The enzyme catalyses D-mannitol(out) + N(pros)-phospho-L-histidyl-[protein] = D-mannitol 1-phosphate(in) + L-histidyl-[protein]. The phosphoenolpyruvate-dependent sugar phosphotransferase system (sugar PTS), a major carbohydrate active transport system, catalyzes the phosphorylation of incoming sugar substrates concomitantly with their translocation across the cell membrane. The enzyme II CmtAB PTS system is involved in D-mannitol transport. In Escherichia coli O157:H7, this protein is PTS system mannitol-specific cryptic EIICB component (cmtA).